Reading from the N-terminus, the 101-residue chain is uncharacterized protein (101 aa).

Residues 65–79 show a composition bias toward low complexity; that stretch reads QEAAAPAGPQEPAEA. The segment at 65–101 is disordered; sequence QEAAAPAGPQEPAEASGDAGKKEEVEEEEIEIDFGMF. A compositionally biased stretch (acidic residues) spans 89 to 101; that stretch reads VEEEEIEIDFGMF.

This is an uncharacterized protein from Encephalitozoon cuniculi (strain GB-M1) (Microsporidian parasite).